The following is a 173-amino-acid chain: Lipoprotein signal peptidase (173 aa).

A run of 3 helical transmembrane segments spans residues leucine 9–valine 29, valine 37–phenylalanine 57, and isoleucine 70–serine 90. Active-site residues include aspartate 124 and aspartate 146. A helical membrane pass occupies residues phenylalanine 142–leucine 162.

Belongs to the peptidase A8 family.

It is found in the cell inner membrane. It carries out the reaction Release of signal peptides from bacterial membrane prolipoproteins. Hydrolyzes -Xaa-Yaa-Zaa-|-(S,diacylglyceryl)Cys-, in which Xaa is hydrophobic (preferably Leu), and Yaa (Ala or Ser) and Zaa (Gly or Ala) have small, neutral side chains.. It functions in the pathway protein modification; lipoprotein biosynthesis (signal peptide cleavage). This protein specifically catalyzes the removal of signal peptides from prolipoproteins. In Treponema denticola (strain ATCC 35405 / DSM 14222 / CIP 103919 / JCM 8153 / KCTC 15104), this protein is Lipoprotein signal peptidase.